A 234-amino-acid chain; its full sequence is Opacity protein V28 (234 aa).

A signal peptide is located at residue A1.

This sequence belongs to the opacity porin family.

It is found in the cell outer membrane. Functionally, implicated in a number of adherence functions. OPA proteins are implicated in pathogenesis and are subject to phase variation. In Neisseria gonorrhoeae, this protein is Opacity protein V28.